The sequence spans 639 residues: 1-deoxy-D-xylulose-5-phosphate synthase (639 aa).

Thiamine diphosphate is bound by residues His-79 and 120–122 (GHS). Asp-151 is a Mg(2+) binding site. Residues 152–153 (GG), Asn-180, Tyr-288, and Glu-370 contribute to the thiamine diphosphate site. Asn-180 is a binding site for Mg(2+).

This sequence belongs to the transketolase family. DXPS subfamily. In terms of assembly, homodimer. It depends on Mg(2+) as a cofactor. Thiamine diphosphate is required as a cofactor.

It catalyses the reaction D-glyceraldehyde 3-phosphate + pyruvate + H(+) = 1-deoxy-D-xylulose 5-phosphate + CO2. It participates in metabolic intermediate biosynthesis; 1-deoxy-D-xylulose 5-phosphate biosynthesis; 1-deoxy-D-xylulose 5-phosphate from D-glyceraldehyde 3-phosphate and pyruvate: step 1/1. In terms of biological role, catalyzes the acyloin condensation reaction between C atoms 2 and 3 of pyruvate and glyceraldehyde 3-phosphate to yield 1-deoxy-D-xylulose-5-phosphate (DXP). In Methylococcus capsulatus (strain ATCC 33009 / NCIMB 11132 / Bath), this protein is 1-deoxy-D-xylulose-5-phosphate synthase.